Consider the following 393-residue polypeptide: Homoserine O-succinyltransferase (393 aa).

An AB hydrolase-1 domain is found at 62-372 (NAVLVCHALN…PHGHDAFLLD (311 aa)). The active-site Nucleophile is Ser-168. Arg-238 contributes to the substrate binding site. Active-site residues include Asp-333 and His-366. Asp-367 serves as a coordination point for substrate.

This sequence belongs to the AB hydrolase superfamily. MetX family. Homodimer.

It is found in the cytoplasm. The catalysed reaction is L-homoserine + succinyl-CoA = O-succinyl-L-homoserine + CoA. Its pathway is amino-acid biosynthesis; L-methionine biosynthesis via de novo pathway; O-succinyl-L-homoserine from L-homoserine: step 1/1. Functionally, transfers a succinyl group from succinyl-CoA to L-homoserine, forming succinyl-L-homoserine. This chain is Homoserine O-succinyltransferase, found in Cupriavidus taiwanensis (strain DSM 17343 / BCRC 17206 / CCUG 44338 / CIP 107171 / LMG 19424 / R1) (Ralstonia taiwanensis (strain LMG 19424)).